The chain runs to 361 residues: L-threonine 3-dehydrogenase (361 aa).

Cys38 contributes to the Zn(2+) binding site. Residues Thr40 and His43 each act as charge relay system in the active site. Residues His63, Glu64, Cys93, Cys96, Cys99, and Cys107 each contribute to the Zn(2+) site. NAD(+)-binding positions include Ile175, Asp195, Arg200, 262–264, and 286–287; these read LGI and IY.

The protein belongs to the zinc-containing alcohol dehydrogenase family. Homotetramer. Zn(2+) serves as cofactor.

It localises to the cytoplasm. The catalysed reaction is L-threonine + NAD(+) = (2S)-2-amino-3-oxobutanoate + NADH + H(+). It participates in amino-acid degradation; L-threonine degradation via oxydo-reductase pathway; glycine from L-threonine: step 1/2. Catalyzes the NAD(+)-dependent oxidation of L-threonine to 2-amino-3-ketobutyrate. In Pectobacterium atrosepticum (strain SCRI 1043 / ATCC BAA-672) (Erwinia carotovora subsp. atroseptica), this protein is L-threonine 3-dehydrogenase.